Reading from the N-terminus, the 346-residue chain is Porphobilinogen deaminase (346 aa).

Cys242 bears the S-(dipyrrolylmethanemethyl)cysteine mark. Positions 317–346 (ATEPGARSGTGAVRPPETDLSNPSPMENPQ) are disordered. The segment covering 335 to 346 (DLSNPSPMENPQ) has biased composition (polar residues).

It belongs to the HMBS family. As to quaternary structure, monomer. Requires dipyrromethane as cofactor.

It catalyses the reaction 4 porphobilinogen + H2O = hydroxymethylbilane + 4 NH4(+). Its pathway is porphyrin-containing compound metabolism; protoporphyrin-IX biosynthesis; coproporphyrinogen-III from 5-aminolevulinate: step 2/4. Functionally, tetrapolymerization of the monopyrrole PBG into the hydroxymethylbilane pre-uroporphyrinogen in several discrete steps. The chain is Porphobilinogen deaminase from Nocardia farcinica (strain IFM 10152).